The following is a 96-amino-acid chain: Co-chaperonin GroES (96 aa).

This sequence belongs to the GroES chaperonin family. Heptamer of 7 subunits arranged in a ring. Interacts with the chaperonin GroEL.

It localises to the cytoplasm. Together with the chaperonin GroEL, plays an essential role in assisting protein folding. The GroEL-GroES system forms a nano-cage that allows encapsulation of the non-native substrate proteins and provides a physical environment optimized to promote and accelerate protein folding. GroES binds to the apical surface of the GroEL ring, thereby capping the opening of the GroEL channel. This Aggregatibacter actinomycetemcomitans (Actinobacillus actinomycetemcomitans) protein is Co-chaperonin GroES.